The primary structure comprises 255 residues: Octanoyltransferase (255 aa).

In terms of domain architecture, BPL/LPL catalytic spans 54-238 (GDANELVWLL…SFTTIFGATV (185 aa)). Substrate is bound by residues 92–99 (RGGQLTYH), 167–169 (AIG), and 180–182 (GIA). The active-site Acyl-thioester intermediate is the Cys-198.

This sequence belongs to the LipB family.

Its subcellular location is the cytoplasm. It carries out the reaction octanoyl-[ACP] + L-lysyl-[protein] = N(6)-octanoyl-L-lysyl-[protein] + holo-[ACP] + H(+). Its pathway is protein modification; protein lipoylation via endogenous pathway; protein N(6)-(lipoyl)lysine from octanoyl-[acyl-carrier-protein]: step 1/2. Functionally, catalyzes the transfer of endogenously produced octanoic acid from octanoyl-acyl-carrier-protein onto the lipoyl domains of lipoate-dependent enzymes. Lipoyl-ACP can also act as a substrate although octanoyl-ACP is likely to be the physiological substrate. In Rhodopseudomonas palustris (strain BisB5), this protein is Octanoyltransferase.